Here is a 56-residue protein sequence, read N- to C-terminus: Large ribosomal subunit protein bL32 (56 aa).

Residues 1 to 39 are disordered; the sequence is MAVQQNKKSRSKRGMRRSHDSLSTAQLSVDATSGELHRR. Residues 7 to 16 are compositionally biased toward basic residues; the sequence is KKSRSKRGMR. The span at 21–31 shows a compositional bias: polar residues; the sequence is SLSTAQLSVDA.

Belongs to the bacterial ribosomal protein bL32 family.

The protein is Large ribosomal subunit protein bL32 of Shewanella piezotolerans (strain WP3 / JCM 13877).